Here is a 479-residue protein sequence, read N- to C-terminus: Catalase easC (479 aa).

Residues 1–13 show a composition bias toward polar residues; the sequence is MASQVSLTAQGSG. Residues 1-28 form a disordered region; that stretch reads MASQVSLTAQGSGLSAPLNGPEHLTSTT. Histidine 53 is a catalytic residue. Tyrosine 343 is a heme binding site. The segment at 365–385 is disordered; the sequence is HAANDAPKTKKPAVPLQKQSR.

It belongs to the catalase family. Requires heme as cofactor.

The protein operates within alkaloid biosynthesis; ergot alkaloid biosynthesis. Its function is as follows. Catalase; part of the gene cluster that mediates the biosynthesis of fungal ergot alkaloid. DmaW catalyzes the first step of ergot alkaloid biosynthesis by condensing dimethylallyl diphosphate (DMAP) and tryptophan to form 4-dimethylallyl-L-tryptophan. The second step is catalyzed by the methyltransferase easF that methylates 4-dimethylallyl-L-tryptophan in the presence of S-adenosyl-L-methionine, resulting in the formation of 4-dimethylallyl-L-abrine. The catalase easC and the FAD-dependent oxidoreductase easE then transform 4-dimethylallyl-L-abrine to chanoclavine-I which is further oxidized by easD in the presence of NAD(+), resulting in the formation of chanoclavine-I aldehyde. Agroclavine dehydrogenase easG then mediates the conversion of chanoclavine-I aldehyde to agroclavine via a non-enzymatic adduct reaction: the substrate is an iminium intermediate that is formed spontaneously from chanoclavine-I aldehyde in the presence of glutathione. Further conversion of agroclavine to paspalic acid is a two-step process involving oxidation of agroclavine to elymoclavine and of elymoclavine to paspalic acid, the second step being performed by the elymoclavine oxidase cloA. However, cloA does not encode a functional enzyme indicating that C.fusiformis terminates its ergot alkaloid pathway at elymoclavine. The protein is Catalase easC of Claviceps fusiformis (Ergot fungus).